Consider the following 244-residue polypeptide: Haloacid dehalogenase-like hydrolase domain-containing protein Sgpp (244 aa).

Residue Asp-28 is the Nucleophile of the active site. Mg(2+) contacts are provided by Asp-28, Asp-30, and Asp-189. Catalysis depends on Asp-30, which acts as the Proton donor.

Belongs to the HAD-like hydrolase superfamily. DOG/GPP family. The cofactor is Mg(2+). In terms of tissue distribution, ubiquitous with highest expression in flowers.

Its function is as follows. Acts as a phosphosugar phosphatase on a broad range of sugar phosphate substrates with preferential activity on D-ribose-5-phosphate, 2-deoxy-D-ribose-5-phosphate, 2-deoxy-D-glucose-6-phosphate, and D-mannose-6-phosphate and with a lower activity on D-fructose-1-phosphate, D-glucose-6-phosphate, DL-glycerol-3-phosphate, and D-fructose-6-phosphate. The sequence is that of Haloacid dehalogenase-like hydrolase domain-containing protein Sgpp (SGPP) from Arabidopsis thaliana (Mouse-ear cress).